A 355-amino-acid chain; its full sequence is BAG family molecular chaperone regulator 1 (355 aa).

Positions methionine 1–glutamate 112 are disordered. Residues proline 26–arginine 39 are compositionally biased toward basic and acidic residues. Polar residues-rich tracts occupy residues serine 80 to arginine 91 and serine 102 to glutamate 111. 7 repeat units span residues lysine 103–threonine 108, glutamate 111–isoleucine 116, glutamate 117–threonine 122, glutamate 123–alanine 128, glutamate 129–threonine 134, glutamate 141–threonine 146, and glutamate 147–proline 152. The interval glutamate 111 to glutamate 209 is 7 X 6 AA tandem repeat of E-E-X(4). A disordered region spans residues threonine 132 to threonine 151. The 81-residue stretch at leucine 154 to proline 234 folds into the Ubiquitin-like domain. The segment at aspartate 182–glycine 229 is interaction with HSPA8. Positions methionine 226–glutamate 355 are interaction with PPP1R15A. The BAG domain maps to histidine 256–glutamate 336.

In terms of assembly, homodimer. Forms a heteromeric complex with HSP70/HSC70. Binds to the ATPase domain of HSP/HSC70 chaperones. Interacts with NR3C1. Interacts with the N-terminal region of MAPRE2. Interacts with PPP1R15A. Interacts with BCL2 in an ATP-dependent manner. Interacts with SIAH1, HSPA8 (via NBD), HSPA1A (via NBD) and HSPA1B (via NBD). Interacts with SIAH2. Interacts with ESR1; the interaction is promoted in the absence of estradiol (17-beta-estradiol/E2). Post-translationally, ubiquitinated; mediated by SIAH1 or SIAH2 and leading to its subsequent proteasomal degradation. Isoform 2 is expressed in the heart, lung, kidney and spinal cord. Isoform 1 and isoform 2 are expressed in hematopoietic cell lines. The levels of isoform 2 are relatively constant in all the cell lines examined while the levels of isoform 1 are more variable (at protein level). Isoform 1 is expressed in the lung and kidney. Isoform 2 is expressed in various tissues, with highest levels in testis and stomach.

The protein resides in the nucleus. It is found in the cytoplasm. In terms of biological role, co-chaperone for HSP70 and HSC70 chaperone proteins. Acts as a nucleotide-exchange factor (NEF) promoting the release of ADP from the HSP70 and HSC70 proteins thereby triggering client/substrate protein release. Nucleotide release is mediated via its binding to the nucleotide-binding domain (NBD) of HSPA8/HSC70 where as the substrate release is mediated via its binding to the substrate-binding domain (SBD) of HSPA8/HSC70. Inhibits the pro-apoptotic function of PPP1R15A, and has anti-apoptotic activity. Markedly increases the anti-cell death function of BCL2 induced by various stimuli. Involved in the STUB1-mediated proteasomal degradation of ESR1 in response to age-related circulating estradiol (17-beta-estradiol/E2) decline, thereby promotes neuronal apoptosis in response to ischemic reperfusion injury. The polypeptide is BAG family molecular chaperone regulator 1 (Bag1) (Mus musculus (Mouse)).